A 293-amino-acid chain; its full sequence is Undecaprenyl-diphosphatase (293 aa).

6 consecutive transmembrane segments (helical) span residues 74 to 94 (VLVF…AGVF), 107 to 127 (WMII…KDLI), 134 to 154 (MWIT…AEKM), 209 to 229 (FLLA…DAFA), 243 to 263 (VGTL…MKFV), and 271 to 291 (FAAY…LGML).

It belongs to the UppP family.

The protein localises to the cell membrane. It catalyses the reaction di-trans,octa-cis-undecaprenyl diphosphate + H2O = di-trans,octa-cis-undecaprenyl phosphate + phosphate + H(+). Its function is as follows. Catalyzes the dephosphorylation of undecaprenyl diphosphate (UPP). Confers resistance to bacitracin. The protein is Undecaprenyl-diphosphatase of Corynebacterium glutamicum (strain R).